Consider the following 135-residue polypeptide: Small ribosomal subunit protein uS12 (135 aa).

The residue at position 89 (D89) is a 3-methylthioaspartic acid. The disordered stretch occupies residues 108-135; sequence NKRTVSRSKYGTKKAKATDKKATDSKKK. The segment covering 111–122 has biased composition (basic residues); the sequence is TVSRSKYGTKKA. A compositionally biased stretch (basic and acidic residues) spans 123–135; that stretch reads KATDKKATDSKKK.

It belongs to the universal ribosomal protein uS12 family. Part of the 30S ribosomal subunit. Contacts proteins S8 and S17. May interact with IF1 in the 30S initiation complex.

Functionally, with S4 and S5 plays an important role in translational accuracy. In terms of biological role, interacts with and stabilizes bases of the 16S rRNA that are involved in tRNA selection in the A site and with the mRNA backbone. Located at the interface of the 30S and 50S subunits, it traverses the body of the 30S subunit contacting proteins on the other side and probably holding the rRNA structure together. The combined cluster of proteins S8, S12 and S17 appears to hold together the shoulder and platform of the 30S subunit. This Helicobacter pylori (strain HPAG1) protein is Small ribosomal subunit protein uS12.